The sequence spans 173 residues: NADH-quinone oxidoreductase subunit B 1 (173 aa).

C42, C43, C107, and C137 together coordinate [4Fe-4S] cluster.

It belongs to the complex I 20 kDa subunit family. As to quaternary structure, NDH-1 is composed of 14 different subunits. Subunits NuoB, C, D, E, F, and G constitute the peripheral sector of the complex. The cofactor is [4Fe-4S] cluster.

It is found in the cell inner membrane. It catalyses the reaction a quinone + NADH + 5 H(+)(in) = a quinol + NAD(+) + 4 H(+)(out). NDH-1 shuttles electrons from NADH, via FMN and iron-sulfur (Fe-S) centers, to quinones in the respiratory chain. The immediate electron acceptor for the enzyme in this species is believed to be ubiquinone. Couples the redox reaction to proton translocation (for every two electrons transferred, four hydrogen ions are translocated across the cytoplasmic membrane), and thus conserves the redox energy in a proton gradient. The polypeptide is NADH-quinone oxidoreductase subunit B 1 (Anaeromyxobacter sp. (strain K)).